A 1085-amino-acid chain; its full sequence is Aminopeptidase N (1085 aa).

Positions 1–30 (MKLTKGCAYKYIIFTVLILANILYDNKKRC) form a signal peptide, required for ER targeting and membrane association; not cleaved. A sufficient for targeting to the food vacuole region spans residues 1 to 200 (MKLTKGCAYK…VKKNEPKIHY (200 aa)). The tract at residues 108–130 (EKGDNNNNNHQNNNGNDNKKRLG) is disordered. Residues 112 to 123 (NNNNNHQNNNGN) show a composition bias toward low complexity. Glutamate 319, glycine 460, alanine 461, and glutamate 463 together coordinate a peptide. Histidine 496 provides a ligand contact to Zn(2+). Catalysis depends on glutamate 497, which acts as the Proton acceptor. Zn(2+) contacts are provided by histidine 500 and glutamate 519.

It belongs to the peptidase M1 family. As to quaternary structure, heterodimer of the p68 form and the p35 form which are derived from the p120 precursor. It depends on Zn(2+) as a cofactor. The full length protein appears to be cleaved into a 120 kDa precursor. This precursor is then proteolytically cleaved at the N-terminus generating a 96 kDa form which is further processed at the C-terminus into 68 kDa and 35 kDa forms that remain associated.

It localises to the parasitophorous vacuole membrane. The protein resides in the nucleus. Its subcellular location is the cytoplasm. The protein localises to the vacuole lumen. With respect to regulation, inhibited by 1,10-phenanthroline, EDTA and bestatin. Inhibited by (Benzyl)Tyr-Ala (BTA). Activity is not affected by phosphoramidin, PMSF, leupeptin, iodoacetamide or pepstatin. Displays aminopeptidase activity with a broad substrate specificity. Preferentially, cleaves after Leu and Met, but also cleaves after Ala and Arg. Low activity towards Lys, Phe, Tyr, Trp, Gln, Ser and Gly and negligible activity towards Glu, Asp, Pro, Ile, Thr, Val, His and Asn. Has dipeptidase activity. Plays a role in the terminal stages of host hemoglobin digestion by cleaving the N-terminal residue of small hemoglobin-derived oligopeptides. This Plasmodium falciparum (isolate 3D7) protein is Aminopeptidase N.